The sequence spans 528 residues: Calcium-dependent protein kinase 13 (528 aa).

Glycine 2 carries the N-myristoyl glycine lipid modification. Positions 17-32 (KSNYSGHDHARKDAAG) are enriched in basic and acidic residues. The tract at residues 17-37 (KSNYSGHDHARKDAAGGKKSA) is disordered. Residue serine 43 is modified to Phosphoserine. In terms of domain architecture, Protein kinase spans 54-312 (YLLDRELGRG…AKQVLEHPWI (259 aa)). Residues 60–68 (LGRGEFGVT) and lysine 83 each bind ATP. Aspartate 178 acts as the Proton acceptor in catalysis. Phosphoserine is present on serine 218. The tract at residues 318–348 (APNVPLGDVVKSRLKQFSVMNRFKRKALRVI) is autoinhibitory domain. EF-hand domains lie at 355 to 390 (EEVEDIKVMFNKMDTDNDGIVSIEELKAGLRDFSTQ), 391 to 426 (LAESEVQMLIEAVDTKGKGTLDYGEFVAVSLHLQKV), 427 to 462 (ANDEHLRKAFSYFDKDGNGYILPQELCDALKEDGGD), and 463 to 498 (DCVDVANDIFQEVDTDKDGRISYEEFAAMMKTGTDW). Ca(2+)-binding residues include aspartate 368, aspartate 370, aspartate 372, glutamate 379, aspartate 404, threonine 410, glutamate 415, aspartate 440, aspartate 442, asparagine 444, tyrosine 446, glutamate 451, aspartate 476, aspartate 478, aspartate 480, and arginine 482. Serine 484 carries the post-translational modification Phosphoserine. Glutamate 487 is a binding site for Ca(2+). Serine 522 is modified (phosphoserine).

This sequence belongs to the protein kinase superfamily. Ser/Thr protein kinase family. CDPK subfamily.

Its subcellular location is the cell membrane. The enzyme catalyses L-seryl-[protein] + ATP = O-phospho-L-seryl-[protein] + ADP + H(+). It carries out the reaction L-threonyl-[protein] + ATP = O-phospho-L-threonyl-[protein] + ADP + H(+). With respect to regulation, activated by calcium. Autophosphorylation may play an important role in the regulation of the kinase activity. Its function is as follows. May play a role in signal transduction pathways that involve calcium as a second messenger. The chain is Calcium-dependent protein kinase 13 (CPK13) from Arabidopsis thaliana (Mouse-ear cress).